A 3241-amino-acid chain; its full sequence is PHD finger protein rhinoceros (3241 aa).

Over residues 1-16 (MSQRGKRGNQQHHQSH) the composition is skewed to basic residues. Positions 1–126 (MSQRGKRGNQ…GASSSSSWQA (126 aa)) are disordered. 2 stretches are compositionally biased toward low complexity: residues 42–55 (PPNG…AEVT) and 90–126 (RAAA…SWQA). The PHD-type 1 zinc-finger motif lies at 312-362 (NVICDVCRSPDSEEANEMVFCDNCNICVHQACYGITAIPSGQWLCRTCSMG). The C2HC pre-PHD-type zinc-finger motif lies at 364–398 (KPDCVLCPNKGGAMKSNKSGKHWAHVSCALWIPEV). The PHD-type 2 zinc-finger motif lies at 422 to 481 (LICVLCRKRVGSCIQCSVKPCKTAYHVTCAFQHGLEMRAIIEEGNAEDGVKLRSYCQKHS). 6 disordered regions span residues 482–501 (MSKG…ASVA), 508–554 (NRYG…ARAQ), 737–1266 (SGKQ…VATP), 1279–1483 (PQRQ…STKV), 1500–1613 (PKTN…SETR), and 1632–1746 (NLGA…QHLL). Residues 540 to 554 (KTELTSEERNQARAQ) show a composition bias toward basic and acidic residues. The span at 762–777 (KKLNNGILSSRTSSPE) shows a compositional bias: polar residues. Residues 807 to 874 (KSSAAAATST…SGSSSAGSGV (68 aa)) show a composition bias toward low complexity. Residues 931–943 (ERCRNRQEPERGA) show a composition bias toward basic and acidic residues. The span at 949-965 (QSKSVPNRSQASRSKPT) shows a compositional bias: polar residues. Residues 995-1007 (DADESVSSDESEE) are compositionally biased toward acidic residues. Low complexity predominate over residues 1019 to 1031 (STTTSGLATTGSA). Positions 1060–1075 (TVESNVSDSQNQQTIR) are enriched in polar residues. Over residues 1087–1104 (TAATTSSTSQAASSTSKA) the composition is skewed to low complexity. Polar residues-rich tracts occupy residues 1117-1126 (IGNSTKTKPN) and 1151-1163 (NMRS…TLQP). Positions 1184-1211 (KVKDSSSRVSNEADKSSLEKVRPKEHLQ) are enriched in basic and acidic residues. Residues 1313-1327 (VTSATISGSGSSVPA) show a composition bias toward polar residues. Phosphothreonine is present on Thr1346. Ser1352 carries the post-translational modification Phosphoserine. A Phosphothreonine modification is found at Thr1364. Residues 1382 to 1426 (SSSSSGDSESSSSSSSSGSSSSSGGSDSDSESQASNSENPSSREP) are compositionally biased toward low complexity. At Thr1456 the chain carries Phosphothreonine. Residues 1463–1483 (NVLNIPSTRSRQNSTTKSTKV) are compositionally biased toward polar residues. Positions 1541 to 1558 (SPEKTVSRCKSRAEESPK) are enriched in basic and acidic residues. Residues 1576–1594 (KGTSSLDKLLNKKQQQMNH) are compositionally biased toward polar residues. Pro residues predominate over residues 1599–1608 (TPPPISPTPP). Positions 1664-1675 (TAPTRTQLSASA) are enriched in polar residues. The segment covering 1688–1699 (PAAPLPASPTPT) has biased composition (pro residues). Residues 1717-1731 (RRMRWRSRRRRRRRS) show a composition bias toward basic residues. Coiled coils occupy residues 1741–1770 (HTQH…ASKY) and 1893–1925 (SEED…KEAV). Disordered regions lie at residues 2037-2061 (LEKS…GQPA), 2124-2148 (AERR…PVVT), 2203-2227 (NNTN…TPNN), 2346-2454 (TPPV…GGVT), 2598-2629 (ATGT…PAPN), 2667-2691 (SEEV…ARSQ), 2768-2811 (NDDS…NSSS), 2832-2911 (GAGA…SVDE), 2964-3015 (NKRG…TTTM), 3042-3169 (KAET…EAAM), and 3184-3241 (VNVG…CEVR). Positions 2359 to 2381 (KRTSVSGSNLSKKQTHKSPQLPQ) are enriched in polar residues. Over residues 2392 to 2402 (PLQPPTPPAPV) the composition is skewed to pro residues. The segment covering 2430-2439 (GSGGSGAPGR) has biased composition (gly residues). 2 stretches are compositionally biased toward polar residues: residues 2598–2611 (ATGT…QHSG) and 2673–2689 (DSDS…SDAR). The segment covering 2855–2865 (NNDNNGKTGAA) has biased composition (polar residues). The segment covering 2876–2887 (KTLESSEDDHQA) has biased composition (basic and acidic residues). Ser2880 and Ser2881 each carry phosphoserine. Residues 2899-2911 (ANETPSGVSSVDE) show a composition bias toward polar residues. Positions 2964–2974 (NKRGVVVKDGE) are enriched in basic and acidic residues. Residues 2984–3002 (KRPKSSKPKKEKKEKKRQK) are compositionally biased toward basic residues. Residues 3003 to 3015 (QQQLILSSSTTTM) are compositionally biased toward low complexity. Residues Ser3104 and Ser3110 each carry the phosphoserine modification. Composition is skewed to polar residues over residues 3115 to 3130 (LLNS…NTSP) and 3184 to 3197 (VNVG…NSLP). Positions 3198–3218 (SASGTGSASSNSCNSNSINNN) are enriched in low complexity. Over residues 3219-3230 (GSGGGRASGEGG) the composition is skewed to gly residues.

Belongs to the JADE family.

The protein localises to the nucleus. May function as a negative regulator of the EGFR/Ras/MAPK signaling pathway during eye development. In Drosophila melanogaster (Fruit fly), this protein is PHD finger protein rhinoceros (rno).